The following is a 329-amino-acid chain: Phosphate import ATP-binding protein PstB (329 aa).

Residues F83 to I325 form the ABC transporter domain. G116–S123 serves as a coordination point for ATP.

Belongs to the ABC transporter superfamily. Phosphate importer (TC 3.A.1.7) family. In terms of assembly, the complex is composed of two ATP-binding proteins (PstB), two transmembrane proteins (PstC and PstA) and a solute-binding protein (PstS).

The protein localises to the cell membrane. The catalysed reaction is phosphate(out) + ATP + H2O = ADP + 2 phosphate(in) + H(+). Part of the ABC transporter complex PstSACB involved in phosphate import. Responsible for energy coupling to the transport system. This Mycoplasma genitalium (strain ATCC 33530 / DSM 19775 / NCTC 10195 / G37) (Mycoplasmoides genitalium) protein is Phosphate import ATP-binding protein PstB.